The chain runs to 266 residues: 4-hydroxy-tetrahydrodipicolinate reductase (266 aa).

10 to 15 contributes to the NAD(+) binding site; the sequence is GPRGRM. Lys-38 serves as a coordination point for NADP(+). NAD(+) contacts are provided by residues 99-101 and 125-128; these read GTT and APNF. His-155 acts as the Proton donor/acceptor in catalysis. Residue His-156 coordinates (S)-2,3,4,5-tetrahydrodipicolinate. Lys-159 acts as the Proton donor in catalysis. Residue 165 to 166 coordinates (S)-2,3,4,5-tetrahydrodipicolinate; sequence GT.

Belongs to the DapB family.

It is found in the cytoplasm. The catalysed reaction is (S)-2,3,4,5-tetrahydrodipicolinate + NAD(+) + H2O = (2S,4S)-4-hydroxy-2,3,4,5-tetrahydrodipicolinate + NADH + H(+). It catalyses the reaction (S)-2,3,4,5-tetrahydrodipicolinate + NADP(+) + H2O = (2S,4S)-4-hydroxy-2,3,4,5-tetrahydrodipicolinate + NADPH + H(+). Its pathway is amino-acid biosynthesis; L-lysine biosynthesis via DAP pathway; (S)-tetrahydrodipicolinate from L-aspartate: step 4/4. Functionally, catalyzes the conversion of 4-hydroxy-tetrahydrodipicolinate (HTPA) to tetrahydrodipicolinate. In Bacillus cereus (strain ATCC 14579 / DSM 31 / CCUG 7414 / JCM 2152 / NBRC 15305 / NCIMB 9373 / NCTC 2599 / NRRL B-3711), this protein is 4-hydroxy-tetrahydrodipicolinate reductase.